We begin with the raw amino-acid sequence, 254 residues long: MVIANSNIIFVAGLGGIGLDTSREIVKSGPKNLVVLDRVDNPAAIAELKALNPKVTVTFYPYDVTVPVAETKKLLKTIFDELKTVDLLINGAGILDDNQIERTIAVNFTGTVNTTTAIMDFWDKRKGGPGGVIANICSVTGFNSIYQVPVYSASKAAALSFTTSLAKLAHITGVTAYSINPGITKTVLVHKFNSWLSVEPRVAELLLEHPTQTTLQCAQNFVKAIEANQNGAIWKLDLGRLDAIEWTKHWDSGI.

10–33 (FVAGLGGIGLDTSREIVKSGPKNL) contributes to the NAD(+) binding site. Ser-138 is a substrate binding site. The Proton acceptor role is filled by Tyr-151.

It belongs to the short-chain dehydrogenases/reductases (SDR) family. In terms of assembly, homodimer.

It catalyses the reaction a primary alcohol + NAD(+) = an aldehyde + NADH + H(+). The catalysed reaction is a secondary alcohol + NAD(+) = a ketone + NADH + H(+). This Drosophila differens (Fruit fly) protein is Alcohol dehydrogenase (Adh).